A 794-amino-acid chain; its full sequence is MGGQMQQNNAAAATALYDGALPTNDAGDAVMARWLQSAGLQHLASPVASTGNDQRHLPNLLMQGYGAQTAEEKQRLFQLMRNLNFNGESTSESYTPTAHTSAAMPSSEGFFSPEFRGDFGAGLLDLHAMDDTELLSEHVITEPFEPSPFMPSVNKEFEEDYNLAANRQQRQQTEAEPLGLLPKSDKENNSVAKIKVVVRKRPLNKKETAKKEEDVVTVSDNSLTVHEPRVKVDLTAYVEKHEFCFDAVLDEDVSNDEVYRATIEPIIPIIFQRTKATCFAYGQTGSGKTFTMKPLPIRAVEDLMRLLRQPVYSNQRFKLWLSYFEIYGGKLFDLLSERKKLCMREDGRQQVCIVGLQEYEVSDVQIVKDFIEKGNAERSTGSTGANEESSRSHAILQLVVKKHVEVKDTRRRNNDSNELPGKVVGKISFIDLAGSERGADTTDNDRQTRIEGAEINKSLLALKECIRALDNDQLHIPFRGSKLTEVLRDSFVGNSRTVMISCISPNAGSCEHTLNTLRYADRVKSLSKSGNSKKDQTANSMPPVNKDPLLGPNDVEDVFEPPQEVNVPETRRRVVEKDSNSSTSGIDFRQPTNYREESGIPSFSMDKGRSEPNSSFAGSTSQRNNISSYPQETSDREEKVKKVSPPRGKGLREEKPDRPQNWSKRDVSSSDIPTLTNFRQNASETASRQYETASRQYETDPSLDENLDALLEEEEALIAAHRKEIEDTMEIVREEMKLLAEVDQPGSMIENYVTQLSFVLSRKAAGLVSLQARLARFQHRLKEQEILSRKRVPR.

Residues 193-526 form the Kinesin motor domain; sequence KIKVVVRKRP…LRYADRVKSL (334 aa). Position 282–289 (282–289) interacts with ATP; it reads GQTGSGKT. Residues 525–699 are disordered; it reads SLSKSGNSKK…YETASRQYET (175 aa). Positions 569 to 579 are enriched in basic and acidic residues; that stretch reads ETRRRVVEKDS. 2 stretches are compositionally biased toward polar residues: residues 580–593 and 611–632; these read NSST…QPTN and EPNS…YPQE. Positions 650–668 are enriched in basic and acidic residues; sequence GLREEKPDRPQNWSKRDVS. Residues 669 to 696 are compositionally biased toward polar residues; that stretch reads SSDIPTLTNFRQNASETASRQYETASRQ. The stretch at 705-742 forms a coiled coil; that stretch reads ENLDALLEEEEALIAAHRKEIEDTMEIVREEMKLLAEV.

The protein belongs to the TRAFAC class myosin-kinesin ATPase superfamily. Kinesin family. KIN-13 subfamily. In terms of assembly, component of the active ARAC10-IRC5-KIN13A complex. Interacts (via-C-terminus) with ICR2 and ICR5 (via N-terminus). No interactions with ICR1. Expressed in leaves, roots, young and mature seedlings. Preferentially expressed in the secondary cell wall pits of differentiating metaxylem vessel cells (at the protein level).

The protein resides in the golgi apparatus. It localises to the golgi stack. Its subcellular location is the cytoplasm. It is found in the cytoskeleton. In terms of biological role, internal motor kinesin involved in trichome morphogenesis. Participates in regulating the formation of Golgi-associated vesicles. Plays a central role in microtubule disassembly via the active ARAC10-ICR5 cascade, which establishes the secondary cell wall pattern in metaxylem vessel cells. Acts redundantly with KIN13B to modulate cell wall synthesis and cell expansion via the THE1 pathway. This is Kinesin-like protein KIN-13A from Arabidopsis thaliana (Mouse-ear cress).